The primary structure comprises 310 residues: N-acetyl-gamma-glutamyl-phosphate reductase (310 aa).

The active site involves Cys116.

The protein belongs to the NAGSA dehydrogenase family. Type 2 subfamily.

It localises to the cytoplasm. The enzyme catalyses N-acetyl-L-glutamate 5-semialdehyde + phosphate + NADP(+) = N-acetyl-L-glutamyl 5-phosphate + NADPH + H(+). It functions in the pathway amino-acid biosynthesis; L-arginine biosynthesis; N(2)-acetyl-L-ornithine from L-glutamate: step 3/4. Functionally, catalyzes the NADPH-dependent reduction of N-acetyl-5-glutamyl phosphate to yield N-acetyl-L-glutamate 5-semialdehyde. This chain is N-acetyl-gamma-glutamyl-phosphate reductase, found in Chelativorans sp. (strain BNC1).